The chain runs to 806 residues: Glycerol-3-phosphate acyltransferase (806 aa).

The HXXXXD motif signature appears at 305–310 (CHRSHM).

It belongs to the GPAT/DAPAT family.

The protein localises to the cell inner membrane. It carries out the reaction sn-glycerol 3-phosphate + an acyl-CoA = a 1-acyl-sn-glycero-3-phosphate + CoA. It participates in phospholipid metabolism; CDP-diacylglycerol biosynthesis; CDP-diacylglycerol from sn-glycerol 3-phosphate: step 1/3. The chain is Glycerol-3-phosphate acyltransferase from Salmonella arizonae (strain ATCC BAA-731 / CDC346-86 / RSK2980).